The sequence spans 330 residues: uncharacterized protein (330 aa).

The active site involves histidine 257.

Belongs to the IUNH family.

This is an uncharacterized protein from Schizosaccharomyces pombe (strain 972 / ATCC 24843) (Fission yeast).